A 571-amino-acid chain; its full sequence is Medium/long-chain-fatty-acid--CoA ligase FadD8 (571 aa).

Residues 1 to 22 are disordered; it reads MSTAGDDAVGVPPACGGRSDAV.

It belongs to the ATP-dependent AMP-binding enzyme family.

It catalyses the reaction a medium-chain fatty acid + ATP + CoA = a medium-chain fatty acyl-CoA + AMP + diphosphate. It carries out the reaction a long-chain fatty acid + ATP + CoA = a long-chain fatty acyl-CoA + AMP + diphosphate. The enzyme catalyses hexanoate + ATP + CoA = hexanoyl-CoA + AMP + diphosphate. The catalysed reaction is dodecanoate + ATP + CoA = dodecanoyl-CoA + AMP + diphosphate. It catalyses the reaction hexadecanoate + ATP + CoA = hexadecanoyl-CoA + AMP + diphosphate. The protein operates within lipid metabolism; fatty acid metabolism. Catalyzes the activation of medium/long-chain fatty acids as acyl-coenzyme A (acyl-CoA). In Mycobacterium tuberculosis (strain ATCC 25618 / H37Rv), this protein is Medium/long-chain-fatty-acid--CoA ligase FadD8.